The sequence spans 355 residues: N5-carboxyaminoimidazole ribonucleotide synthase (355 aa).

Residues R80, K120, G125–Q131, E153–I156, E161, H184, and N237–E238 each bind ATP. An ATP-grasp domain is found at K84 to T267.

The protein belongs to the PurK/PurT family. Homodimer.

The enzyme catalyses 5-amino-1-(5-phospho-beta-D-ribosyl)imidazole + hydrogencarbonate + ATP = 5-carboxyamino-1-(5-phospho-D-ribosyl)imidazole + ADP + phosphate + 2 H(+). It participates in purine metabolism; IMP biosynthesis via de novo pathway; 5-amino-1-(5-phospho-D-ribosyl)imidazole-4-carboxylate from 5-amino-1-(5-phospho-D-ribosyl)imidazole (N5-CAIR route): step 1/2. Its function is as follows. Catalyzes the ATP-dependent conversion of 5-aminoimidazole ribonucleotide (AIR) and HCO(3)(-) to N5-carboxyaminoimidazole ribonucleotide (N5-CAIR). The polypeptide is N5-carboxyaminoimidazole ribonucleotide synthase (Escherichia coli (strain K12)).